The primary structure comprises 179 residues: Probable protein archease (179 aa).

Aspartate 55, aspartate 178, and valine 179 together coordinate Ca(2+).

Belongs to the archease family.

Functionally, activates the tRNA-splicing ligase complex by facilitating the enzymatic turnover of catalytic subunit RtcB. Acts by promoting the guanylylation of RtcB, a key intermediate step in tRNA ligation. Can also alter the NTP specificity of RtcB such that ATP, dGTP or ITP is used efficiently. This is Probable protein archease from Mycobacterium tuberculosis (strain CDC 1551 / Oshkosh).